Reading from the N-terminus, the 391-residue chain is GTPase Obg (391 aa).

One can recognise an Obg domain in the interval Met-1–Leu-159. One can recognise an OBG-type G domain in the interval Ala-160–Lys-333. Residues Gly-166–Ser-173, Phe-191–Val-195, Asp-213–Gly-216, Asn-283–Asp-286, and Ser-314–Ile-316 contribute to the GTP site. Mg(2+) contacts are provided by Ser-173 and Thr-193.

The protein belongs to the TRAFAC class OBG-HflX-like GTPase superfamily. OBG GTPase family. Monomer. It depends on Mg(2+) as a cofactor.

The protein resides in the cytoplasm. Functionally, an essential GTPase which binds GTP, GDP and possibly (p)ppGpp with moderate affinity, with high nucleotide exchange rates and a fairly low GTP hydrolysis rate. Plays a role in control of the cell cycle, stress response, ribosome biogenesis and in those bacteria that undergo differentiation, in morphogenesis control. The protein is GTPase Obg of Photorhabdus laumondii subsp. laumondii (strain DSM 15139 / CIP 105565 / TT01) (Photorhabdus luminescens subsp. laumondii).